We begin with the raw amino-acid sequence, 348 residues long: Phospho-2-dehydro-3-deoxyheptonate aldolase, Trp-sensitive (348 aa).

The protein belongs to the class-I DAHP synthase family.

It carries out the reaction D-erythrose 4-phosphate + phosphoenolpyruvate + H2O = 7-phospho-2-dehydro-3-deoxy-D-arabino-heptonate + phosphate. Its pathway is metabolic intermediate biosynthesis; chorismate biosynthesis; chorismate from D-erythrose 4-phosphate and phosphoenolpyruvate: step 1/7. In terms of biological role, stereospecific condensation of phosphoenolpyruvate (PEP) and D-erythrose-4-phosphate (E4P) giving rise to 3-deoxy-D-arabino-heptulosonate-7-phosphate (DAHP). This is Phospho-2-dehydro-3-deoxyheptonate aldolase, Trp-sensitive (aroH) from Escherichia coli O157:H7.